A 70-amino-acid polypeptide reads, in one-letter code: SPbeta prophage-derived uncharacterized HTH-type transcriptional regulator YopO (70 aa).

The region spanning 5-59 (IKQLMVKRGITIEELSRETMIDMQTLNKIIEMPDESDVTTIKLIALVLNVSIDEL) is the HTH cro/C1-type domain. A DNA-binding region (H-T-H motif) is located at residues 16–35 (IEELSRETMIDMQTLNKIIE).

The sequence is that of SPbeta prophage-derived uncharacterized HTH-type transcriptional regulator YopO (yopO) from Bacillus subtilis (strain 168).